An 83-amino-acid chain; its full sequence is Small ribosomal subunit protein eS27 (83 aa).

The segment at 37-59 (CPGCFNITTVFSHAQTVVICGSC) adopts a C4-type zinc-finger fold.

Belongs to the eukaryotic ribosomal protein eS27 family. As to quaternary structure, component of the small ribosomal subunit (SSU). Mature yeast ribosomes consist of a small (40S) and a large (60S) subunit. The 40S small subunit contains 1 molecule of ribosomal RNA (18S rRNA) and at least 33 different proteins. The large 60S subunit contains 3 rRNA molecules (25S, 5.8S and 5S rRNA) and at least 46 different proteins. It depends on Zn(2+) as a cofactor.

It is found in the cytoplasm. Its function is as follows. Component of the ribosome, a large ribonucleoprotein complex responsible for the synthesis of proteins in the cell. The small ribosomal subunit (SSU) binds messenger RNAs (mRNAs) and translates the encoded message by selecting cognate aminoacyl-transfer RNA (tRNA) molecules. The large subunit (LSU) contains the ribosomal catalytic site termed the peptidyl transferase center (PTC), which catalyzes the formation of peptide bonds, thereby polymerizing the amino acids delivered by tRNAs into a polypeptide chain. The nascent polypeptides leave the ribosome through a tunnel in the LSU and interact with protein factors that function in enzymatic processing, targeting, and the membrane insertion of nascent chains at the exit of the ribosomal tunnel. The polypeptide is Small ribosomal subunit protein eS27 (rps27) (Schizosaccharomyces pombe (strain 972 / ATCC 24843) (Fission yeast)).